Reading from the N-terminus, the 162-residue chain is Probable metalloprotease y4jG (162 aa).

One can recognise an MPN domain in the interval 9-147; it reads TVALPRDCVS…YRLDAKANWN (139 aa). Zn(2+) contacts are provided by H94, H96, and D107.

Belongs to the peptidase M67B family.

The protein is Probable metalloprotease y4jG of Sinorhizobium fredii (strain NBRC 101917 / NGR234).